The sequence spans 637 residues: Dihydrolipoyllysine-residue acetyltransferase component of pyruvate dehydrogenase complex, mitochondrial (637 aa).

Residues 1–85 constitute a mitochondrion transit peptide; the sequence is MWRVCVRRAQ…LLGSPGRRSY (85 aa). The tract at residues 80–100 is disordered; sequence PGRRSYSLPPHQKVPLPSLSP. The region spanning 90–166 is the Lipoyl-binding 1 domain; that stretch reads HQKVPLPSLS…PIGSIICITV (77 aa). Residue Ser99 is modified to Phosphoserine. Lys131 is modified (N6-lipoyllysine). Disordered stretches follow at residues 189 to 219 and 307 to 340; these read QAAAPTPAPAPCAAPTAPSAKAPGSSYPPHM and LKPQAPPPVPPPVAAAPPTAQPLAPTPSGLPAGP. Positions 201–211 are enriched in low complexity; that stretch reads AAPTAPSAKAP. The Lipoyl-binding 2 domain maps to 218-287; sequence HMQVSAVGEQ…PLGAPLCIIV (70 aa). A compositionally biased stretch (pro residues) spans 310 to 321; sequence QAPPPVPPPVAA. A compositionally biased stretch (low complexity) spans 322–333; it reads APPTAQPLAPTP. Residues 345 to 382 form the Peripheral subunit-binding (PSBD) domain; the sequence is FVSPLAKKLAAERGIDLTQVKGTGPEGRIIKKDIDSFV. Arg451 serves as a coordination point for CoA. Lys456 carries the N6-acetyllysine modification. An N6-succinyllysine modification is found at Lys463. Ser465 contributes to the CoA binding site. Lys537 carries the post-translational modification N6-succinyllysine. CoA is bound by residues Ser556, Asn557, and Gly581. Active-site residues include His610 and Asp614.

This sequence belongs to the 2-oxoacid dehydrogenase family. Part of the pyruvate dehydrogenase complex (PDHc) that is a multi-enzyme complex composed of multiple copies of three enzymes, pyruvate dehydrogenase (subunits PDH1A and PDHB, E1 component), dihydrolipoamide acetyltransferase (DLAT, E2 component), and dihydrolipoamide dehydrogenase (DLD, E3 component) to which is added an additional protein the E3-binding protein (PDHX, E3BP). In terms of structural architecture, the E2 and E3BP components assemble into a 60meric central core with icosahedral symmetry. The central core is decorated with E1 and E3 proteins. Currently, two alternative models for the E2:E3BP stoichiometry are considered as being either 48:12 (E2(48)-E3BP(12)) or 40:20 (E2(40)-E3BP(20)). Interacts with PDK2 and PDK3. Interacts with SIRT4. Interacts with PDHB. (R)-lipoate serves as cofactor. In terms of processing, delipoylated at Lys-131 by SIRT4, delipoylation decreases the PHD complex activity. In terms of tissue distribution, detected at higher levels in cauda epididymal spermatazoa than in caput epididymal spermatazoa (at protein level).

The protein localises to the mitochondrion matrix. It carries out the reaction N(6)-[(R)-dihydrolipoyl]-L-lysyl-[protein] + acetyl-CoA = N(6)-[(R)-S(8)-acetyldihydrolipoyl]-L-lysyl-[protein] + CoA. In terms of biological role, as part of the pyruvate dehydrogenase complex, catalyzes the transfers of an acetyl group to a lipoic acid moiety. The pyruvate dehydrogenase complex, catalyzes the overall conversion of pyruvate to acetyl-CoA and CO(2), and thereby links cytoplasmic glycolysis and the mitochondrial tricarboxylic acid (TCA) cycle. The protein is Dihydrolipoyllysine-residue acetyltransferase component of pyruvate dehydrogenase complex, mitochondrial of Mesocricetus auratus (Golden hamster).